The chain runs to 176 residues: HTH-type transcriptional regulator DctR (176 aa).

An HTH luxR-type domain is found at 109–174 (VPEANVSLSR…ELVRHQHIDY (66 aa)). Residues 133–152 (TEDILEKLKISLKTFYCHKH) constitute a DNA-binding region (H-T-H motif).

May act as a transcriptional regulator of dctA. This chain is HTH-type transcriptional regulator DctR (dctR), found in Shigella flexneri.